A 286-amino-acid chain; its full sequence is Diaminopimelate epimerase (286 aa).

Residues Asn-22, Gln-56, and Asn-76 each coordinate substrate. Residue Cys-85 is the Proton donor of the active site. Residues 86–87, Asn-169, Asn-202, and 220–221 contribute to the substrate site; these read GN and ER. Residue Cys-229 is the Proton acceptor of the active site. Position 230-231 (230-231) interacts with substrate; the sequence is GS.

The protein belongs to the diaminopimelate epimerase family. In terms of assembly, homodimer.

It localises to the cytoplasm. The catalysed reaction is (2S,6S)-2,6-diaminopimelate = meso-2,6-diaminopimelate. It participates in amino-acid biosynthesis; L-lysine biosynthesis via DAP pathway; DL-2,6-diaminopimelate from LL-2,6-diaminopimelate: step 1/1. Its function is as follows. Catalyzes the stereoinversion of LL-2,6-diaminopimelate (L,L-DAP) to meso-diaminopimelate (meso-DAP), a precursor of L-lysine and an essential component of the bacterial peptidoglycan. The chain is Diaminopimelate epimerase from Buchnera aphidicola subsp. Baizongia pistaciae (strain Bp).